Reading from the N-terminus, the 626-residue chain is Glyco-Gag protein (626 aa).

The Cytoplasmic portion of the chain corresponds to 1-66 (LGDVPGTSGA…SVWNRSRAAR (66 aa)). Residues 67 to 86 (LVCCSIVLCCLCLTVFLYLS) form a helical membrane-spanning segment. Residues 87–626 (ENMGQAVTTP…PQASLLTLDD (540 aa)) lie on the Extracellular side of the membrane. An N-linked (GlcNAc...) asparagine; by host glycan is attached at asparagine 113. Composition is skewed to pro residues over residues 198-212 (PPSAPSLPPEPPLST) and 249-261 (DPPPYRDPGPPSP). 2 disordered regions span residues 198–306 (PPSA…FPLR) and 522–626 (RETP…TLDD). Composition is skewed to basic and acidic residues over residues 522–554 (RETPEEREERIRRETEEKEERRRAEDVQREKER) and 574–607 (RQDRQGGERRRPQLDHDQCAYCKEKGHWARDCPK). A coiled-coil region spans residues 526–566 (EEREERIRRETEEKEERRRAEDVQREKERDRRRHREMSKLL). The CCHC-type zinc-finger motif lies at 590–607 (DQCAYCKEKGHWARDCPK).

Post-translationally, glycosylated by host. In terms of processing, cleaved by host near the middle of the molecule, releasing the c-terminal half containing capsid and nucleoprotein domains op GAG.

The protein resides in the host cell membrane. Functionally, plays a role in viral particle release. Presumably acts by facilitating the fission of the virion bud at the cell surface. May prevent the antiviral activity of murine APOBEC3. The sequence is that of Glyco-Gag protein from Mus musculus (Mouse).